The primary structure comprises 355 residues: Putative inositol monophosphatase 3 (355 aa).

The chain crosses the membrane as a helical span at residues 16 to 36 (LPATIVAILLTFVLVYFLNFH). Positions 127, 167, 169, 170, and 292 each coordinate Mg(2+). A substrate-binding site is contributed by glutamate 127. Residues 169-172 (LDAT) and aspartate 292 contribute to the substrate site.

It belongs to the inositol monophosphatase superfamily. Mg(2+) serves as cofactor.

The protein localises to the membrane. It catalyses the reaction a myo-inositol phosphate + H2O = myo-inositol + phosphate. The protein operates within polyol metabolism; myo-inositol biosynthesis; myo-inositol from D-glucose 6-phosphate: step 2/2. The chain is Putative inositol monophosphatase 3 from Drosophila melanogaster (Fruit fly).